A 61-amino-acid chain; its full sequence is Copper metallothionein 1-1 (61 aa).

Positions 1-8 are excised as a propeptide; sequence MFSELINF. Cu cation is bound by residues cysteine 15, cysteine 17, cysteine 19, cysteine 22, and cysteine 28. Lysine 30 is covalently cross-linked (Glycyl lysine isopeptide (Lys-Gly) (interchain with G-Cter in ubiquitin)). Positions 32, 34, 38, 44, and 46 each coordinate Cu cation. A disordered region spans residues 37-61; sequence GCNSDDKCPCGNKSEETKKSCCSGK. Basic and acidic residues predominate over residues 40 to 55; the sequence is SDDKCPCGNKSEETKK.

This sequence belongs to the metallothionein superfamily. Type 12 family.

Functionally, protects the cell against copper toxicity by tightly chelating copper ions. May also act as a depository for copper designated for the effective transfer into the apo forms of copper proteins. This chain is Copper metallothionein 1-1 (CUP1-1), found in Saccharomyces cerevisiae (strain ATCC 204508 / S288c) (Baker's yeast).